Reading from the N-terminus, the 263-residue chain is Palmitoyltransferase ZDHHC21 (263 aa).

Topologically, residues 1–4 are cytoplasmic; the sequence is MKMR. Residues 5 to 25 form a helical membrane-spanning segment; the sequence is LHFVVDPMGWFCMSMVFFVWI. Topologically, residues 26-44 are extracellular; sequence YNSFLIPKLVLLPHYAEGH. Residues 45–65 form a helical membrane-spanning segment; it reads ITAEPVICYYLASLLCFSALF. The Cytoplasmic portion of the chain corresponds to 66–131; sequence RASTTDPGKL…WINNCVGEDN (66 aa). The DHHC domain occupies 90–140; that stretch reads ELCNKCNMMRPKRSHHCSRCGHCVRRMDHHCPWINNCVGEDNHWLFLQLCF. Cys120 serves as the catalytic S-palmitoyl cysteine intermediate. The chain crosses the membrane as a helical span at residues 132-152; the sequence is HWLFLQLCFYTQVLSFYTLVL. At 153–181 the chain is on the extracellular side; sequence DFCQYYYFLPLSSVDQADFAVHHELALLR. A helical membrane pass occupies residues 182–202; it reads VSCFMGLIMFGGISSLFYTQV. At 203–263 the chain is on the cytoplasmic side; the sequence is KGILTDTTTI…KLNLTIRSHV (61 aa).

It belongs to the DHHC palmitoyltransferase family.

The protein resides in the golgi apparatus membrane. The protein localises to the golgi apparatus. It localises to the cis-Golgi network membrane. It is found in the cell membrane. The catalysed reaction is L-cysteinyl-[protein] + hexadecanoyl-CoA = S-hexadecanoyl-L-cysteinyl-[protein] + CoA. In terms of biological role, palmitoyltransferase that catalyzes the addition of palmitate onto various protein substrates. The sequence is that of Palmitoyltransferase ZDHHC21 from Danio rerio (Zebrafish).